The chain runs to 970 residues: Cullin-4B (970 aa).

A compositionally biased stretch (basic and acidic residues) spans 1–14 (MSRSTRSKERREND). 2 disordered regions span residues 1-157 (MSRS…SFCL) and 189-211 (AEESSSSSSSSSPTAATSQQQQQ). Residue T15 is modified to Phosphothreonine. Position 17 is a phosphoserine (S17). The span at 36 to 57 (PPRPPYPPLLPPVFPPPTPPPQ) shows a compositional bias: pro residues. A compositionally biased stretch (low complexity) spans 78–98 (SGFSSPNPSAASAAAQEVRSA). A compositionally biased stretch (polar residues) spans 99–109 (TDGNTSTTPPT). Position 106 is a phosphothreonine (T106). S110 carries the post-translational modification Phosphoserine. Positions 112–115 (KKRK) match the Nuclear localization signal motif. The segment covering 117 to 126 (NSSSSSSNSS) has biased composition (low complexity). A compositionally biased stretch (polar residues) spans 146 to 155 (DSASPSTSSF). S154 and S200 each carry phosphoserine. A compositionally biased stretch (low complexity) spans 192–211 (SSSSSSSSSPTAATSQQQQQ). T202 is modified (phosphothreonine). A Glycyl lysine isopeptide (Lys-Gly) (interchain with G-Cter in ubiquitin) cross-link involves residue K247. S250 is modified (phosphoserine). A Cullin neddylation domain is found at 902-962 (DRQYQIDAAI…RDYMERDKEN (61 aa)). K916 is covalently cross-linked (Glycyl lysine isopeptide (Lys-Gly) (interchain with G-Cter in NEDD8)).

It belongs to the cullin family. Component of multiple DCX (DDB1-CUL4-X-box) E3 ubiquitin-protein ligase complexes that seem to be formed of DDB1, CUL4A or CUL4B, RBX1 and a variable substrate recognition component which seems to belong to a protein family described as DCAF (Ddb1- and Cul4-associated factor) or CDW (CUL4-DDB1-associated WD40-repeat) proteins. Component of the DCX(DTL) complex with the putative substrate recognition component DTL. Component of the DCX(DDB2) complex with the putative substrate recognition component DDB2. Component of DCX complexes part of the DesCEND (destruction via C-end degrons) pathway, which contain either TRPC4AP or DCAF12 as substrate-recognition component. Component of the DCX(AMBRA1) complex with the substrate recognition component AMBRA1. Part of a complex with RBX1 and TIP120A/CAND1. Component of the DCX(WDR77) complex, composed of Cul4b, Ddb1, Wdr77 and Rbx1. Interacts with RBX1, GRWD1, MLST8, SMU1, TLE2, TLE3, DCAF1, DDA1, DCAF6, DCAF17, DDB2, DCAF8, TIP120A/CAND1 and TMEM113. Interacts with cyclin E (CCNE1 or CCNE2) and with importins alpha-1 (KPNA2), alpha-3 (KPNA4), alpha-5 (KPNA1) and beta-1 (KPNB1). May interact with WDR26, WDR51B, SNRNP40, WDR61, WDR76 and WDR5. Interacts (unneddylated form) with DCUN1D1, DCUN1D2, DCUN1D3, DCUN1D4 and DCUN1D5; these interactions promote the cullin neddylation. Post-translationally, neddylated. Deneddylated via its interaction with the COP9 signalosome (CSN) complex. In terms of tissue distribution, expressed in oocytes (at protein level).

The protein resides in the cytoplasm. Its subcellular location is the nucleus. It participates in protein modification; protein ubiquitination. In terms of biological role, core component of multiple cullin-RING-based E3 ubiquitin-protein ligase complexes which mediate the ubiquitination and subsequent proteasomal degradation of target proteins. The functional specificity of the E3 ubiquitin-protein ligase complex depends on the variable substrate recognition subunit. CUL4B may act within the complex as a scaffold protein, contributing to catalysis through positioning of the substrate and the ubiquitin-conjugating enzyme. Plays a role as part of the E3 ubiquitin-protein ligase complex in polyubiquitination of CDT1, histone H2A, histone H3 and histone H4 in response to radiation-induced DNA damage. Targeted to UV damaged chromatin by DDB2 and may be important for DNA repair and DNA replication. A number of DCX complexes (containing either TRPC4AP or DCAF12 as substrate-recognition component) are part of the DesCEND (destruction via C-end degrons) pathway, which recognizes a C-degron located at the extreme C terminus of target proteins, leading to their ubiquitination and degradation. The DCX(AMBRA1) complex is a master regulator of the transition from G1 to S cell phase by mediating ubiquitination of phosphorylated cyclin-D (CCND1, CCND2 and CCND3). The DCX(AMBRA1) complex also acts as a regulator of Cul5-RING (CRL5) E3 ubiquitin-protein ligase complexes by mediating ubiquitination and degradation of Elongin-C (ELOC) component of CRL5 complexes. Required for ubiquitination of cyclin E (CCNE1 or CCNE2), and consequently, normal G1 cell cycle progression. Component of the DCX(WDR77) complex, which mediates ubiquitination and degradation of Irgm1 in intestinal cells. Regulates the mammalian target-of-rapamycin (mTOR) pathway involved in control of cell growth, size and metabolism. Specific CUL4B regulation of the mTORC1-mediated pathway is dependent upon 26S proteasome function and requires interaction between CUL4B and MLST8. With CUL4A, contributes to ribosome biogenesis. This is Cullin-4B from Mus musculus (Mouse).